The following is a 92-amino-acid chain: Bombyxin A-6 (92 aa).

The N-terminal stretch at 1–19 (MKILLAIALMLSTVMWVST) is a signal peptide. Position 20 is a pyrrolidone carboxylic acid (glutamine 20). 3 disulfides stabilise this stretch: cysteine 29-cysteine 79, cysteine 41-cysteine 92, and cysteine 78-cysteine 83. A propeptide spans 50–70 (SGAQFASYGSAWLMPYSEGRG) (c peptide like).

This sequence belongs to the insulin family. Heterodimer of a B chain and an A chain linked by two disulfide bonds.

It is found in the secreted. Functionally, brain peptide responsible for activation of prothoracic glands to produce ecdysone in insects. This chain is Bombyxin A-6 (BBXA6), found in Bombyx mori (Silk moth).